A 227-amino-acid polypeptide reads, in one-letter code: Ureidoacrylate amidohydrolase RutB (227 aa).

D22 acts as the Proton acceptor in catalysis. Residue K131 is part of the active site. Catalysis depends on C164, which acts as the Nucleophile.

This sequence belongs to the isochorismatase family. RutB subfamily.

The enzyme catalyses (Z)-3-ureidoacrylate + H2O + H(+) = (Z)-3-aminoacrylate + NH4(+) + CO2. It carries out the reaction (Z)-3-ureidoacrylate + H2O = (Z)-3-aminoacrylate + carbamate + H(+). The catalysed reaction is (Z)-2-methylureidoacrylate + H2O + H(+) = (Z)-2-methylaminoacrylate + NH4(+) + CO2. In terms of biological role, hydrolyzes ureidoacrylate to form aminoacrylate and carbamate. The carbamate hydrolyzes spontaneously, thereby releasing one of the nitrogen atoms of the pyrimidine ring as ammonia and one of its carbon atoms as CO2. The chain is Ureidoacrylate amidohydrolase RutB from Azorhizobium caulinodans (strain ATCC 43989 / DSM 5975 / JCM 20966 / LMG 6465 / NBRC 14845 / NCIMB 13405 / ORS 571).